The chain runs to 134 residues: Small ribosomal subunit protein uS9 (134 aa).

Positions 114-134 (QKEAKNFGGPGARSKYQKSYR) are disordered.

It belongs to the universal ribosomal protein uS9 family.

This is Small ribosomal subunit protein uS9 from Methanosarcina mazei (strain ATCC BAA-159 / DSM 3647 / Goe1 / Go1 / JCM 11833 / OCM 88) (Methanosarcina frisia).